The chain runs to 56 residues: Small ribosomal subunit protein uS14 (56 aa).

It belongs to the universal ribosomal protein uS14 family. Component of the small ribosomal subunit (SSU). Mature yeast ribosomes consist of a small (40S) and a large (60S) subunit. The 40S small subunit contains 1 molecule of ribosomal RNA (18S rRNA) and at least 33 different proteins. The large 60S subunit contains 3 rRNA molecules (25S, 5.8S and 5S rRNA) and at least 46 different proteins.

The protein resides in the cytoplasm. Its subcellular location is the nucleus. Component of the ribosome, a large ribonucleoprotein complex responsible for the synthesis of proteins in the cell. The small ribosomal subunit (SSU) binds messenger RNAs (mRNAs) and translates the encoded message by selecting cognate aminoacyl-transfer RNA (tRNA) molecules. The large subunit (LSU) contains the ribosomal catalytic site termed the peptidyl transferase center (PTC), which catalyzes the formation of peptide bonds, thereby polymerizing the amino acids delivered by tRNAs into a polypeptide chain. The nascent polypeptides leave the ribosome through a tunnel in the LSU and interact with protein factors that function in enzymatic processing, targeting, and the membrane insertion of nascent chains at the exit of the ribosomal tunnel. This is Small ribosomal subunit protein uS14 (rps29) from Schizosaccharomyces pombe (strain 972 / ATCC 24843) (Fission yeast).